A 1349-amino-acid polypeptide reads, in one-letter code: Spike glycoprotein (1349 aa).

The N-terminal stretch at 1 to 13 is a signal peptide; the sequence is MFFILLITLPSVF. Residues 14–1293 are Extracellular-facing; sequence AVIGDLKCNT…GTYEYYVKWP (1280 aa). In terms of domain architecture, BetaCoV S1-NTD spans 15–298; sequence VIGDLKCNTS…DFMSEIMCKT (284 aa). 7 cysteine pairs are disulfide-bonded: cysteine 21/cysteine 165, cysteine 160/cysteine 193, cysteine 172/cysteine 252, cysteine 286/cysteine 296, cysteine 331/cysteine 356, cysteine 374/cysteine 427, and cysteine 386/cysteine 601. 3 N-linked (GlcNAc...) asparagine; by host glycosylation sites follow: asparagine 22, asparagine 59, and asparagine 133. N-linked (GlcNAc...) asparagine; by host glycosylation is present at asparagine 198. The region spanning 329–603 is the BetaCoV S1-CTD domain; the sequence is PNCDIEAWLN…DVNSGTTCST (275 aa). N-linked (GlcNAc...) asparagine; by host glycosylation is found at asparagine 437, asparagine 456, asparagine 512, asparagine 611, asparagine 635, asparagine 662, asparagine 682, asparagine 700, asparagine 725, asparagine 774, and asparagine 881. Fusion peptide stretches follow at residues 900–921 and 919–939; these read SAIE…VQAY and QAYN…VQSY. Residue asparagine 923 is glycosylated (N-linked (GlcNAc...) asparagine; by host). A disulfide bridge connects residues cysteine 924 and cysteine 935. The tract at residues 1000–1050 is heptad repeat 1; it reads QKLIASAFNNALDSIQEGFDATNSALVKIQAVVNANAEALNNLLQQLSNRF. The stretch at 1029 to 1073 forms a coiled coil; it reads QAVVNANAEALNNLLQQLSNRFGAISASLQEILSRLDALEAKAQI. N-linked (GlcNAc...) asparagine; by host glycans are attached at residues asparagine 1180, asparagine 1210, asparagine 1220, asparagine 1239, asparagine 1253, and asparagine 1274. The segment at 1244 to 1282 is heptad repeat 2; sequence APDLSFDYINVTFLDLQDEMNRLQEAIKVLNHSYINLKD. Residues 1255–1283 adopt a coiled-coil conformation; it reads TFLDLQDEMNRLQEAIKVLNHSYINLKDI. Residues 1294–1314 form a helical membrane-spanning segment; sequence WYVWLLICLAGVVMLVLLFFI. Over 1315-1349 the chain is Cytoplasmic; that stretch reads CCCTGCGTSCFKKCGGCFDDYTGHQEFVIKTSHDD. Positions 1345–1349 match the KxHxx motif; sequence TSHDD.

The protein belongs to the betacoronaviruses spike protein family. Homotrimer; each monomer consists of a S1 and a S2 subunit. The resulting peplomers protrude from the virus surface as spikes. Post-translationally, specific enzymatic cleavages in vivo yield mature proteins. The precursor is processed into S1 and S2 by host cell furin or another cellular protease to yield the mature S1 and S2 proteins. Additionally, a second cleavage leads to the release of a fusion peptide after viral attachment to host cell receptor. In terms of processing, the cytoplasmic Cys-rich domain is palmitoylated. Spike glycoprotein is digested within host endosomes.

It is found in the virion membrane. Its subcellular location is the host endoplasmic reticulum-Golgi intermediate compartment membrane. It localises to the host cell membrane. Functionally, attaches the virion to the cell membrane by interacting with host receptor, initiating the infection. Mediates fusion of the virion and cellular membranes by acting as a class I viral fusion protein. Under the current model, the protein has at least three conformational states: pre-fusion native state, pre-hairpin intermediate state, and post-fusion hairpin state. During viral and target cell membrane fusion, the coiled coil regions (heptad repeats) assume a trimer-of-hairpins structure, positioning the fusion peptide in close proximity to the C-terminal region of the ectodomain. The formation of this structure appears to drive apposition and subsequent fusion of viral and target cell membranes. In terms of biological role, acts as a viral fusion peptide which is unmasked following S2 cleavage occurring upon virus endocytosis. The chain is Spike glycoprotein from Porcine hemagglutinating encephalomyelitis virus (strain IAF-404) (HEV).